A 546-amino-acid polypeptide reads, in one-letter code: Probable protein kinase UbiB (546 aa).

Residues Asp124–Leu502 enclose the Protein kinase domain. ATP contacts are provided by residues Leu130–Val138 and Lys153. Asp288 serves as the catalytic Proton acceptor. The next 2 membrane-spanning stretches (helical) occupy residues Tyr501–Pro521 and Glu522–Trp542.

The protein belongs to the ABC1 family. UbiB subfamily.

The protein localises to the cell inner membrane. The protein operates within cofactor biosynthesis; ubiquinone biosynthesis [regulation]. Functionally, is probably a protein kinase regulator of UbiI activity which is involved in aerobic coenzyme Q (ubiquinone) biosynthesis. This Klebsiella pneumoniae (strain 342) protein is Probable protein kinase UbiB.